The following is a 179-amino-acid chain: Dual-action ribosomal maturation protein DarP (179 aa).

The protein belongs to the DarP family.

It is found in the cytoplasm. Functionally, member of a network of 50S ribosomal subunit biogenesis factors which assembles along the 30S-50S interface, preventing incorrect 23S rRNA structures from forming. Promotes peptidyl transferase center (PTC) maturation. The sequence is that of Dual-action ribosomal maturation protein DarP from Aliivibrio fischeri (strain ATCC 700601 / ES114) (Vibrio fischeri).